The sequence spans 195 residues: Large ribosomal subunit protein bL27c (195 aa).

The transit peptide at 1–60 (MASMAFTLVGAFKGMSLSSPCHSSSSASFLRADRVSLSVGGGVGMGVPMTMPVRRLTIQM) directs the protein to the chloroplast.

This sequence belongs to the bacterial ribosomal protein bL27 family. In terms of assembly, part of the 50S ribosomal subunit.

It is found in the plastid. Its subcellular location is the chloroplast. This Oryza sativa subsp. japonica (Rice) protein is Large ribosomal subunit protein bL27c (RPL27).